The primary structure comprises 213 residues: CASP-like protein 2A1 (213 aa).

Over 1-41 the chain is Cytoplasmic; it reads MSKMAEEKAAAVGGLGGAGAADAAQQQQLAAGEAAAARVRP. Residues 42–62 form a helical membrane-spanning segment; it reads VETLLRAAPLGLCVAAMTVML. Topologically, residues 63–83 are extracellular; the sequence is RNQQSNEYGAVAYSDLGGFKY. Residues 84 to 104 form a helical membrane-spanning segment; the sequence is LVYANGLCAAYSLVSAFYTAV. The Cytoplasmic portion of the chain corresponds to 105–113; sequence PRPATVSRS. A helical membrane pass occupies residues 114–134; sequence WLVFLLDQVFTYLILAAGAAA. Topologically, residues 135–166 are extracellular; the sequence is AELLYLAYNGDKEVTWSEACGVFGSFCRQART. Residues 167 to 187 traverse the membrane as a helical segment; that stretch reads SVAITFGTVLCFILLSLISSY. Topologically, residues 188–213 are cytoplasmic; the sequence is RLFSAYEAPPSSALGSKGVEIAAYPR.

It belongs to the Casparian strip membrane proteins (CASP) family. As to quaternary structure, homodimer and heterodimers.

It localises to the cell membrane. The protein is CASP-like protein 2A1 of Zea mays (Maize).